The following is a 221-amino-acid chain: Cytidylate kinase 1 (221 aa).

Position 7-15 (7-15) interacts with ATP; the sequence is GPSASGKSS.

This sequence belongs to the cytidylate kinase family. Type 1 subfamily.

It is found in the cytoplasm. It carries out the reaction CMP + ATP = CDP + ADP. The catalysed reaction is dCMP + ATP = dCDP + ADP. This is Cytidylate kinase 1 from Borrelia garinii subsp. bavariensis (strain ATCC BAA-2496 / DSM 23469 / PBi) (Borreliella bavariensis).